A 247-amino-acid chain; its full sequence is Protein SODIUM POTASSIUM ROOT DEFECTIVE 3 (247 aa).

The segment at 130–166 is disordered; the sequence is GSTGQDTVATEESEASAPKRGSSGPVEEKKKSSGSGS. Residues 167 to 235 enclose the HMA domain; sequence DQVVVLRVSL…KVKNAQFWTP (69 aa). Cys180 and Cys183 together coordinate a metal cation.

The protein localises to the cytoplasm. In terms of biological role, heavy metal-associated protein involved in salt tolerance. In Arabidopsis thaliana (Mouse-ear cress), this protein is Protein SODIUM POTASSIUM ROOT DEFECTIVE 3.